We begin with the raw amino-acid sequence, 247 residues long: ATP synthase subunit a, chloroplastic (247 aa).

A run of 5 helical transmembrane segments spans residues 38 to 58 (QVLITSWVVIAILLGSSIIAV), 95 to 115 (VPFIGTMFLFIFVSNWSGALL), 134 to 154 (INTTVALALLTSVAYFYAGLT), 199 to 219 (LVVVVLVSLVPLVVPIPVMFL), and 220 to 240 (GLFTSGIQALIFATLAAAYIG).

It belongs to the ATPase A chain family. In terms of assembly, F-type ATPases have 2 components, CF(1) - the catalytic core - and CF(0) - the membrane proton channel. CF(1) has five subunits: alpha(3), beta(3), gamma(1), delta(1), epsilon(1). CF(0) has four main subunits: a, b, b' and c.

Its subcellular location is the plastid. It localises to the chloroplast thylakoid membrane. Functionally, key component of the proton channel; it plays a direct role in the translocation of protons across the membrane. The polypeptide is ATP synthase subunit a, chloroplastic (Morus indica (Mulberry)).